We begin with the raw amino-acid sequence, 98 residues long: NADH-ubiquinone oxidoreductase chain 4L (98 aa).

3 consecutive transmembrane segments (helical) span residues 1–21, 29–49, and 59–79; these read MTTMFFNLLLAFMVALMGVYI, TLLCLEGMMLSIFIMVSLTLL, and FPLILLVFSACEAGVGLALLV.

Belongs to the complex I subunit 4L family. As to quaternary structure, core subunit of respiratory chain NADH dehydrogenase (Complex I) which is composed of 45 different subunits.

The protein resides in the mitochondrion inner membrane. The catalysed reaction is a ubiquinone + NADH + 5 H(+)(in) = a ubiquinol + NAD(+) + 4 H(+)(out). In terms of biological role, core subunit of the mitochondrial membrane respiratory chain NADH dehydrogenase (Complex I) which catalyzes electron transfer from NADH through the respiratory chain, using ubiquinone as an electron acceptor. Part of the enzyme membrane arm which is embedded in the lipid bilayer and involved in proton translocation. The polypeptide is NADH-ubiquinone oxidoreductase chain 4L (MT-ND4L) (Zaglossus bruijni (Western long-beaked echidna)).